A 372-amino-acid polypeptide reads, in one-letter code: tRNA pseudouridine synthase D (372 aa).

Aspartate 85 (nucleophile) is an active-site residue. The region spanning 160–330 is the TRUD domain; the sequence is GFANYFGYQR…MQGSRRFMWG (171 aa).

Belongs to the pseudouridine synthase TruD family.

The catalysed reaction is uridine(13) in tRNA = pseudouridine(13) in tRNA. Its function is as follows. Responsible for synthesis of pseudouridine from uracil-13 in transfer RNAs. The polypeptide is tRNA pseudouridine synthase D (Campylobacter jejuni subsp. jejuni serotype O:6 (strain 81116 / NCTC 11828)).